The chain runs to 359 residues: Alanine racemase (359 aa).

Catalysis depends on Lys34, which acts as the Proton acceptor; specific for D-alanine. An N6-(pyridoxal phosphate)lysine modification is found at Lys34. Position 129 (Arg129) interacts with substrate. Tyr256 functions as the Proton acceptor; specific for L-alanine in the catalytic mechanism. Met304 provides a ligand contact to substrate.

The protein belongs to the alanine racemase family. Pyridoxal 5'-phosphate serves as cofactor.

The enzyme catalyses L-alanine = D-alanine. Its pathway is amino-acid biosynthesis; D-alanine biosynthesis; D-alanine from L-alanine: step 1/1. In terms of biological role, catalyzes the interconversion of L-alanine and D-alanine. May also act on other amino acids. This chain is Alanine racemase (alr), found in Photobacterium profundum (strain SS9).